The chain runs to 669 residues: NADH-ubiquinone oxidoreductase chain 5 (669 aa).

Helical transmembrane passes span 3 to 23, 50 to 70, 81 to 100, 119 to 139, 178 to 198, 211 to 231, 253 to 273, 286 to 306, 322 to 342, 377 to 397, 423 to 443, 464 to 484, 522 to 542, 628 to 648, and 649 to 669; these read LLIVILPLIGSFAAGFFGRFL, VALCASACYIKIAPWIFSELF, LTVILLLVVTIVSSLVHIYS, IFTFFMLMLVTGDNFIQLFLG, LALGIMGCFTIFQTVDFSTIF, FLFCNMGFHAITVICILVFIG, TPVSALIHAATMVTAGVFMIA, LIVITFVGAMTSFFAATTGIL, LGYMIFACGISNYSVSVFHLM, LLPFTYAMMLIGSLSLIGFPF, FWLGSVSVFFTSYYSFRLLFL, ILMAIPLILLAFGSIFVGYLA, LIPILFSTLGSFVAYSVNFVV, AFVMLLGLTIFISVIGLWDFI, and SFWVDNRLYFIYIVSFLFINI.

Belongs to the complex I subunit 5 family.

The protein resides in the mitochondrion inner membrane. It carries out the reaction a ubiquinone + NADH + 5 H(+)(in) = a ubiquinol + NAD(+) + 4 H(+)(out). Core subunit of the mitochondrial membrane respiratory chain NADH dehydrogenase (Complex I) that is believed to belong to the minimal assembly required for catalysis. Complex I functions in the transfer of electrons from NADH to the respiratory chain. The immediate electron acceptor for the enzyme is believed to be ubiquinone. In Marchantia polymorpha (Common liverwort), this protein is NADH-ubiquinone oxidoreductase chain 5 (ND5).